The chain runs to 452 residues: Exodeoxyribonuclease 7 large subunit (452 aa).

This sequence belongs to the XseA family. Heterooligomer composed of large and small subunits.

The protein localises to the cytoplasm. It catalyses the reaction Exonucleolytic cleavage in either 5'- to 3'- or 3'- to 5'-direction to yield nucleoside 5'-phosphates.. Its function is as follows. Bidirectionally degrades single-stranded DNA into large acid-insoluble oligonucleotides, which are then degraded further into small acid-soluble oligonucleotides. This is Exodeoxyribonuclease 7 large subunit from Bacillus anthracis (strain A0248).